Here is a 195-residue protein sequence, read N- to C-terminus: MKNNFIIATHNIHKIKEIETILNFYRQHGEGYRKKLPQQAFPPESTVSYEENAKEKALFISQQLPAAKIIADDSGLELPAFPGRYGVQTARELAQEVPDGDLNDYLIHLVDGKSRQFIMKTTIALAINNQVVKIGHGQLKGTIAHAERGVNATGFDRIFIPAGESQTLAEMDQPTRISYLHRARAVKNLLDQLGE.

Asp-73 acts as the Proton acceptor in catalysis.

It belongs to the HAM1 NTPase family. Requires Mn(2+) as cofactor.

It catalyses the reaction 7,8-dihydroneopterin 3'-triphosphate + H2O = 7,8-dihydroneopterin 3'-phosphate + diphosphate + H(+). It functions in the pathway cofactor biosynthesis; tetrahydrofolate biosynthesis. Its function is as follows. Pyrophosphatase involved in the biosynthesis of tetrahydrofolate. Catalyzes the hydrolysis of dihydroneopterin triphosphate (DHNTP) to dihydroneopterin monophosphate (DHNMP) and pyrophosphate. Shows a strict substrate specificity. Has only weak activity with GTP, ITP, XTP and dTTP, and cannot use ATP, UTP, CTP, NAD(+), NADH, diadenosine triphosphate, diadenosine tetraphosphate, ADP-ribose and UDP-glucose. This is Dihydroneopterin triphosphate diphosphatase from Limosilactobacillus reuteri (strain DSM 20016) (Lactobacillus reuteri).